The sequence spans 317 residues: Transaldolase (317 aa).

The active-site Schiff-base intermediate with substrate is Lys126.

The protein belongs to the transaldolase family. Type 1 subfamily. As to quaternary structure, homodimer.

It is found in the cytoplasm. The enzyme catalyses D-sedoheptulose 7-phosphate + D-glyceraldehyde 3-phosphate = D-erythrose 4-phosphate + beta-D-fructose 6-phosphate. It functions in the pathway carbohydrate degradation; pentose phosphate pathway; D-glyceraldehyde 3-phosphate and beta-D-fructose 6-phosphate from D-ribose 5-phosphate and D-xylulose 5-phosphate (non-oxidative stage): step 2/3. In terms of biological role, transaldolase is important for the balance of metabolites in the pentose-phosphate pathway. This is Transaldolase from Burkholderia pseudomallei (strain K96243).